The primary structure comprises 545 residues: Oligopeptide-binding protein OppA (545 aa).

Residues 1–20 (MKKRWSIVTLMLIFTLVLSA) form the signal peptide. Residue Cys21 is the site of N-palmitoyl cysteine attachment. The S-diacylglycerol cysteine moiety is linked to residue Cys21. The residue at position 470 (Thr470) is a Phosphothreonine.

The protein belongs to the bacterial solute-binding protein 5 family. As to quaternary structure, the complex is composed of two ATP-binding proteins (OppD and OppF), two transmembrane proteins (OppB and OppC) and a solute-binding protein (OppA). OppA interacts with FloT in detergent-resistant membranes (DRM). Colocalizes rarely with FloT membrane assemblies.

It is found in the cell membrane. It localises to the membrane raft. Functionally, part of the ABC transporter complex OppABCDF involved in the uptake of oligopeptides. Plays an important nutritional role. Binds peptides containing up to five amino acids residues regardless of their sequence, with highest affinity for tetra- and pentapeptides. Binds to the sporulation-promoting peptide PhrE (Ser-Arg-Asn-Val-Thr). Required for sporulation and genetic competence. The chain is Oligopeptide-binding protein OppA from Bacillus subtilis (strain 168).